Consider the following 150-residue polypeptide: S-protein homolog 24 (150 aa).

N-linked (GlcNAc...) asparagine glycosylation is present at asparagine 122.

This sequence belongs to the plant self-incompatibility (S1) protein family.

It localises to the secreted. The chain is S-protein homolog 24 from Arabidopsis thaliana (Mouse-ear cress).